The sequence spans 364 residues: Dihydroorotate dehydrogenase (quinone) (364 aa).

FMN-binding positions include 61-65 (AGFDK) and Ser-85. Lys-65 contacts substrate. 110 to 114 (NRMGF) contacts substrate. Positions 139 and 170 each coordinate FMN. Residue Asn-170 coordinates substrate. Catalysis depends on Ser-173, which acts as the Nucleophile. Asn-175 is a binding site for substrate. The FMN site is built by Lys-214 and Ser-242. Residue 243-244 (NT) coordinates substrate. Residues Gly-266, Gly-295, and 316 to 317 (YS) each bind FMN.

This sequence belongs to the dihydroorotate dehydrogenase family. Type 2 subfamily. In terms of assembly, monomer. FMN serves as cofactor.

The protein resides in the cell membrane. The enzyme catalyses (S)-dihydroorotate + a quinone = orotate + a quinol. It functions in the pathway pyrimidine metabolism; UMP biosynthesis via de novo pathway; orotate from (S)-dihydroorotate (quinone route): step 1/1. Functionally, catalyzes the conversion of dihydroorotate to orotate with quinone as electron acceptor. The sequence is that of Dihydroorotate dehydrogenase (quinone) from Bradyrhizobium sp. (strain BTAi1 / ATCC BAA-1182).